Consider the following 2128-residue polypeptide: Non-reducing polyketide synthase albA (2128 aa).

Positions 8–244 are N-terminal acylcarrier protein transacylase domain (SAT); the sequence is YLFGDQTSDI…VKAPIHGPYH (237 aa). Positions 375–806 constitute a Ketosynthase family 3 (KS3) domain; it reads NSKIAIIGMS…GGNTALLLED (432 aa). Residues C547, H682, and H724 each act as for beta-ketoacyl synthase activity in the active site. A malonyl-CoA:ACP transacylase (MAT) domain region spans residues 912–1232; it reads FVFTGQGAQY…LASLHLAGID (321 aa). S1001 functions as the For acyl/malonyl transferase activity in the catalytic mechanism. Residues 1286–1425 form an N-terminal hotdog fold region; the sequence is HEYLTTAAQK…CTVRFFDCAA (140 aa). Positions 1286-1598 constitute a PKS/mFAS DH domain; it reads HEYLTTAAQK…FQALSRKILD (313 aa). The product template (PT) domain stretch occupies residues 1290 to 1603; sequence TTAAQKVIET…RKILDTVLPP (314 aa). The active-site Proton acceptor; for dehydratase activity is H1326. Residues 1452–1598 form a C-terminal hotdog fold region; sequence DAHRLGRGMV…FQALSRKILD (147 aa). D1511 acts as the Proton donor; for dehydratase activity in catalysis. One can recognise a Carrier 1 domain in the interval 1618-1695; that stretch reads PSAPSLVKRA…DFKQFLAPMS (78 aa). S1655 carries the O-(pantetheine 4'-phosphoryl)serine modification. The interval 1695 to 1740 is disordered; that stretch reads SQGEASDGSTSDPESSSSFNGGSSTDESSAGSPVSSPPNEKVTQVE. Positions 1700–1723 are enriched in low complexity; it reads SDGSTSDPESSSSFNGGSSTDESS. The span at 1724–1740 shows a compositional bias: polar residues; it reads AGSPVSSPPNEKVTQVE. Residues 1739 to 1816 form the Carrier 2 domain; that stretch reads VEQHATIKEI…DVEDALGLKP (78 aa). Position 1776 is an O-(pantetheine 4'-phosphoryl)serine (S1776). The claisen cyclase domain stretch occupies residues 1854-2126; sequence SPHPRSTSIL…ELGSFIGNAM (273 aa). Residue S1944 is the For Claisen cyclase activity of the active site.

It catalyses the reaction 6 malonyl-CoA + acetyl-CoA + 6 H(+) = naphtopyrone YWA1 + 6 CO2 + 7 CoA + H2O. The protein operates within secondary metabolite biosynthesis. Its function is as follows. Non-reducing polyketide synthase; part of the gene cluster that mediates the biosynthesis of aurasperone B, a dimeric gamma-naphthopyrone. The first step in the biosynthesis of aurasperone B is the production of gamma-naphthopyrone precursor YWA1 by the non-reducing polyketide synthase albA, via condensation of one acetyl-CoA starter unit with 6 malonyl-CoA units. YWA1 is then methylated by aunE at position C-6 to yield foncesin which is further methylated at position C-8 by aunD to produce fonsecin B. A key enzyme in the biosynthetic pathway is the cytochrome P450 monooxygenase aunB which catalyzes the oxidative dimerization of fonsecin B to aurasperone B. AunB also catalyzes the oxidative dimerization of rubrofusarin B into aurasperone A. This Aspergillus niger (strain ATCC 1015 / CBS 113.46 / FGSC A1144 / LSHB Ac4 / NCTC 3858a / NRRL 328 / USDA 3528.7) protein is Non-reducing polyketide synthase albA.